The primary structure comprises 102 residues: MKCATIVCTIAVVLAATLLNGSVQAAPQEEAALSGGANLNTLLDELPEETHHAALENYRAKRATCDLASGFGVGSSLCAAHCIARRYRGGYCNSKAVCVCRN.

The N-terminal stretch at 1–25 (MKCATIVCTIAVVLAATLLNGSVQA) is a signal peptide. Positions 26–62 (APQEEAALSGGANLNTLLDELPEETHHAALENYRAKR) are excised as a propeptide. 3 disulfides stabilise this stretch: Cys-65/Cys-92, Cys-78/Cys-98, and Cys-82/Cys-100.

Belongs to the invertebrate defensin family. Type 1 subfamily.

It localises to the secreted. Its function is as follows. Responsible for the anti Gram-positive activity of immune hemolymph. The polypeptide is Defensin (Def1) (Anopheles gambiae (African malaria mosquito)).